A 371-amino-acid polypeptide reads, in one-letter code: Anhydro-N-acetylmuramic acid kinase (371 aa).

An ATP-binding site is contributed by 12-19; the sequence is GTSADGID.

It belongs to the anhydro-N-acetylmuramic acid kinase family.

The catalysed reaction is 1,6-anhydro-N-acetyl-beta-muramate + ATP + H2O = N-acetyl-D-muramate 6-phosphate + ADP + H(+). It functions in the pathway amino-sugar metabolism; 1,6-anhydro-N-acetylmuramate degradation. The protein operates within cell wall biogenesis; peptidoglycan recycling. In terms of biological role, catalyzes the specific phosphorylation of 1,6-anhydro-N-acetylmuramic acid (anhMurNAc) with the simultaneous cleavage of the 1,6-anhydro ring, generating MurNAc-6-P. Is required for the utilization of anhMurNAc either imported from the medium or derived from its own cell wall murein, and thus plays a role in cell wall recycling. This is Anhydro-N-acetylmuramic acid kinase from Saccharophagus degradans (strain 2-40 / ATCC 43961 / DSM 17024).